The primary structure comprises 220 residues: Aspartic protease inhibitor 8 (220 aa).

The first 23 residues, 1 to 23 (MMKCLFLLCLCLLPIVVFSSTFT), serve as a signal peptide directing secretion. Residues 24 to 32 (SQNLIDLPS) constitute a propeptide that is removed on maturation. Cystine bridges form between C80-C125 and C174-C185.

This sequence belongs to the protease inhibitor I3 (leguminous Kunitz-type inhibitor) family.

The protein localises to the vacuole. Its function is as follows. Inhibitor of cathepsin D (aspartic protease) and trypsin (serine protease). May protect the plant by inhibiting proteases of invading organisms. The protein is Aspartic protease inhibitor 8 of Solanum tuberosum (Potato).